The following is a 288-amino-acid chain: Shikimate dehydrogenase (NADP(+)) (288 aa).

Residues 14-16 and Thr63 each bind shikimate; that span reads SIS. Lys67 acts as the Proton acceptor in catalysis. Glu79 is a binding site for NADP(+). Shikimate is bound by residues Asn88 and Asp103. NADP(+) contacts are provided by residues 127–131, 151–156, and Met219; these read GSGGA and NRTYEK. Shikimate is bound at residue Tyr221. Position 242 (Gly242) interacts with NADP(+).

The protein belongs to the shikimate dehydrogenase family. In terms of assembly, homodimer.

The enzyme catalyses shikimate + NADP(+) = 3-dehydroshikimate + NADPH + H(+). Its pathway is metabolic intermediate biosynthesis; chorismate biosynthesis; chorismate from D-erythrose 4-phosphate and phosphoenolpyruvate: step 4/7. Its function is as follows. Involved in the biosynthesis of the chorismate, which leads to the biosynthesis of aromatic amino acids. Catalyzes the reversible NADPH linked reduction of 3-dehydroshikimate (DHSA) to yield shikimate (SA). This chain is Shikimate dehydrogenase (NADP(+)), found in Caldicellulosiruptor bescii (strain ATCC BAA-1888 / DSM 6725 / KCTC 15123 / Z-1320) (Anaerocellum thermophilum).